Here is a 599-residue protein sequence, read N- to C-terminus: Aspartate--tRNA(Asp/Asn) ligase (599 aa).

Glutamate 172 contacts L-aspartate. Residues 196-199 (QLFK) form an aspartate region. Arginine 218 is an L-aspartate binding site. ATP contacts are provided by residues 218 to 220 (RDE) and glutamine 227. Residue histidine 451 participates in L-aspartate binding. Glutamate 485 contributes to the ATP binding site. Arginine 492 lines the L-aspartate pocket. 537–540 (GLDR) lines the ATP pocket.

Belongs to the class-II aminoacyl-tRNA synthetase family. Type 1 subfamily. Homodimer.

The protein localises to the cytoplasm. The enzyme catalyses tRNA(Asx) + L-aspartate + ATP = L-aspartyl-tRNA(Asx) + AMP + diphosphate. Functionally, aspartyl-tRNA synthetase with relaxed tRNA specificity since it is able to aspartylate not only its cognate tRNA(Asp) but also tRNA(Asn). Reaction proceeds in two steps: L-aspartate is first activated by ATP to form Asp-AMP and then transferred to the acceptor end of tRNA(Asp/Asn). This Aromatoleum aromaticum (strain DSM 19018 / LMG 30748 / EbN1) (Azoarcus sp. (strain EbN1)) protein is Aspartate--tRNA(Asp/Asn) ligase.